A 284-amino-acid polypeptide reads, in one-letter code: Acetylglutamate kinase (284 aa).

Substrate is bound by residues 54 to 55, Arg-76, and Asn-179; that span reads GG.

The protein belongs to the acetylglutamate kinase family. ArgB subfamily.

Its subcellular location is the cytoplasm. It carries out the reaction N-acetyl-L-glutamate + ATP = N-acetyl-L-glutamyl 5-phosphate + ADP. The protein operates within amino-acid biosynthesis; L-arginine biosynthesis; N(2)-acetyl-L-ornithine from L-glutamate: step 2/4. Functionally, catalyzes the ATP-dependent phosphorylation of N-acetyl-L-glutamate. The polypeptide is Acetylglutamate kinase (Sorangium cellulosum (strain So ce56) (Polyangium cellulosum (strain So ce56))).